The primary structure comprises 278 residues: Undecaprenyl-diphosphatase 1 (278 aa).

A run of 6 helical transmembrane segments spans residues 45–65 (AVIGFSAVIQVGAIAAVLVYF), 95–115 (WWVIYATIPIVLVGLAAKPLI), 119–139 (LASLWVVAGSLIVGSGVMWWA), 191–211 (VAATRLSFFLGIPALTGAGLY), 225–245 (PLAVGTLVSFVVAYASIAWLL), and 256–276 (FVVYRIAVGVLLFGLLGTGVL).

The protein belongs to the UppP family.

Its subcellular location is the cell membrane. It carries out the reaction di-trans,octa-cis-undecaprenyl diphosphate + H2O = di-trans,octa-cis-undecaprenyl phosphate + phosphate + H(+). Functionally, catalyzes the dephosphorylation of undecaprenyl diphosphate (UPP). Confers resistance to bacitracin. This is Undecaprenyl-diphosphatase 1 from Streptomyces coelicolor (strain ATCC BAA-471 / A3(2) / M145).